The sequence spans 901 residues: ABC transporter A family member 8 (901 aa).

The next 7 membrane-spanning stretches (helical) occupy residues 34–54, 315–335, 369–389, 402–422, 427–447, 460–477, and 508–528; these read LITIPFFLCLLLLVIQMLFDT, IASLIGPLFFTWVILLLFPVI, FLLISILYMLCFAIFGSLIGL, VFFFICINLQISVAFLASAMF, TATVIAYIYVFGTGLLGIFLF, WIIAMELYPGFSLYRGLY, and CIMLIEWLLLLGLAYYIDQII. The region spanning 586 to 823 is the ABC transporter domain; that stretch reads VLCNNLKKVY…YGGSYVLTVT (238 aa). Position 624–631 (624–631) interacts with ATP; sequence GPNGAGKT.

It belongs to the ABC transporter superfamily. ABCA family. CPR flippase (TC 3.A.1.211) subfamily.

The protein resides in the membrane. The polypeptide is ABC transporter A family member 8 (ABCA8) (Arabidopsis thaliana (Mouse-ear cress)).